The chain runs to 151 residues: S-ribosylhomocysteine lyase (151 aa).

Fe cation contacts are provided by histidine 54, histidine 58, and cysteine 121.

The protein belongs to the LuxS family. In terms of assembly, homodimer. The cofactor is Fe cation.

The enzyme catalyses S-(5-deoxy-D-ribos-5-yl)-L-homocysteine = (S)-4,5-dihydroxypentane-2,3-dione + L-homocysteine. Functionally, involved in the synthesis of autoinducer 2 (AI-2) which is secreted by bacteria and is used to communicate both the cell density and the metabolic potential of the environment. The regulation of gene expression in response to changes in cell density is called quorum sensing. Catalyzes the transformation of S-ribosylhomocysteine (RHC) to homocysteine (HC) and 4,5-dihydroxy-2,3-pentadione (DPD). This chain is S-ribosylhomocysteine lyase, found in Clostridioides difficile (strain 630) (Peptoclostridium difficile).